The sequence spans 165 residues: Bark lectin isoform 2 (165 aa).

Residues N27 and N57 are each glycosylated (N-linked (GlcNAc...) asparagine). Cystine bridges form between C33/C80 and C126/C133.

Belongs to the protease inhibitor I3 (leguminous Kunitz-type inhibitor) family. In terms of assembly, dimer.

Functionally, glucose and N-acetylglucosamine binding lectin. Has hemagglutinating activity against human and rabbit erythrocytes which does not require divalent cations. Inhibits factor Xa and, to a lesser extent, trypsin. Does not inhibit neutrophil elastase, human plasma kallikrein, papain, human plasmin, porcine pancreatic kallikrein and bovin chymotrypsin. Has insecticidal activity against the termite species N.corniger. Induces apoptosis in prostrate cancer cell lines DU145 and PC3. This Crateva tapia (Garlic-pear tree) protein is Bark lectin isoform 2.